Consider the following 1309-residue polypeptide: Target of rapamycin complex 2 subunit ste20 (1309 aa).

In terms of domain architecture, REM-1 spans 24–110; sequence DFIKKMNTTD…IESFQGENGE (87 aa). The interval 105-128 is disordered; that stretch reads QGENGEAKTGSTSLTRSASATVSR. The segment covering 113–128 has biased composition (polar residues); sequence TGSTSLTRSASATVSR. S151 is subject to Phosphoserine. Residues 183 to 205 form a disordered region; sequence NVNEKNNSSSEDTQPNGKRPSSL. Residues 194-205 show a composition bias toward polar residues; sequence DTQPNGKRPSSL. 6 helical membrane passes run 285–305, 392–412, 504–524, 564–584, 926–946, and 984–1004; these read LFLD…WILS, LIDG…LVYL, VIDL…ESFL, TAVL…VCMI, LNHW…LEVC, and LLLR…INFI. T1203 is modified (phosphothreonine).

It belongs to the RICTOR family. In terms of assembly, the target of rapamycin complex 2 (TORC2) is composed of at least bit61, pop3/wat1, sin1, ste20 and tor1. In terms of processing, either Ser-203 or Ser-204 are phosphorylated as well.

The protein localises to the membrane. Functionally, component of TORC2, which regulates multiple cellular processes to control cell growth in response to environmental signals. TORC2 is required for cell survival under various stress conditions. TORC2 positively controls G1 cell-cycle arrest, sexual development and amino acid uptake. Positively regulates amino acid uptake through the control of expression of amino acid permeases. The chain is Target of rapamycin complex 2 subunit ste20 from Schizosaccharomyces pombe (strain 972 / ATCC 24843) (Fission yeast).